A 153-amino-acid chain; its full sequence is Large ribosomal subunit protein uL15 (153 aa).

The disordered stretch occupies residues 21-41 (RGIGSGKGKTGGRGIKGQKSR). Residues 23–35 (IGSGKGKTGGRGI) are compositionally biased toward gly residues.

Belongs to the universal ribosomal protein uL15 family. As to quaternary structure, part of the 50S ribosomal subunit.

Binds to the 23S rRNA. The chain is Large ribosomal subunit protein uL15 from Rickettsia felis (strain ATCC VR-1525 / URRWXCal2) (Rickettsia azadi).